We begin with the raw amino-acid sequence, 300 residues long: Protease HtpX (300 aa).

2 consecutive transmembrane segments (helical) span residues 4–24 (ILLF…TLRL) and 40–60 (SLLI…LFIS). Residue histidine 145 coordinates Zn(2+). Glutamate 146 is a catalytic residue. Histidine 149 contacts Zn(2+). Transmembrane regions (helical) follow at residues 153 to 173 (GDMV…MFFA) and 193 to 213 (LGFF…GLVA). Glutamate 225 contributes to the Zn(2+) binding site.

Belongs to the peptidase M48B family. Zn(2+) serves as cofactor.

It localises to the cell inner membrane. This is Protease HtpX from Chromohalobacter salexigens (strain ATCC BAA-138 / DSM 3043 / CIP 106854 / NCIMB 13768 / 1H11).